A 374-amino-acid polypeptide reads, in one-letter code: AA14 family lytic polysaccharide monooxygenase B (374 aa).

Residues 1–18 (MIPVFLAAIAVFLPLTSG) form the signal peptide. Residues Asn-31, Asn-49, Asn-94, and Asn-151 are each glycosylated (N-linked (GlcNAc...) asparagine). 5 cysteine pairs are disulfide-bonded: Cys-85–Cys-108, Cys-127–Cys-154, Cys-171–Cys-176, Cys-178–Cys-200, and Cys-220–Cys-236. N-linked (GlcNAc...) asparagine glycosylation is found at Asn-235 and Asn-315. The disordered stretch occupies residues 306-374 (ISNATPAPSN…TQSRKMRYVF (69 aa)). A compositionally biased stretch (low complexity) spans 313–344 (PSNGSCSSRPPSSPVSSSAASTTTSRSPRPSA).

The protein belongs to the polysaccharide monooxygenase AA14 family. Cu(2+) is required as a cofactor.

The protein resides in the secreted. In terms of biological role, lytic polysaccharide monooxygenase (LPMO) that oxidatively cleaves xylan with both C1 and C4 regioselectivity and that specifically targets the protective shield made by heteroxylans that cover cellulose microfibrils in wood. Catalysis by LPMOs requires the reduction of the active-site copper from Cu(II) to Cu(I) by a reducing agent and H(2)O(2) or O(2) as a cosubstrate. Cleavage occurs only when xylans are bound to cellulose and not when they are in solution. Increases the efficiency of wood saccharification through oxidative cleavage of highly refractory xylan-coated cellulose fibers via synergistic relationship with xylan-active enzymes, xylobiohydrolases and cellobiohydrolases. This chain is AA14 family lytic polysaccharide monooxygenase B, found in Pycnoporus cinnabarinus (Cinnabar-red polypore).